The following is a 295-amino-acid chain: Putative S-adenosyl-L-methionine-dependent methyltransferase Mvan_0910 (295 aa).

S-adenosyl-L-methionine-binding positions include Asp-126 and 155–156; that span reads DL.

Belongs to the UPF0677 family.

Its function is as follows. Exhibits S-adenosyl-L-methionine-dependent methyltransferase activity. This Mycolicibacterium vanbaalenii (strain DSM 7251 / JCM 13017 / BCRC 16820 / KCTC 9966 / NRRL B-24157 / PYR-1) (Mycobacterium vanbaalenii) protein is Putative S-adenosyl-L-methionine-dependent methyltransferase Mvan_0910.